The primary structure comprises 120 residues: NAD(P)H-quinone oxidoreductase subunit 3, chloroplastic (120 aa).

3 helical membrane-spanning segments follow: residues 9–29, 64–84, and 88–108; these read IFWTFLIIASLIPILAFWISG, MFALVFVVFDVETVFLYPWAM, and VLGVSVFIEAFIFVLILVVGL.

Belongs to the complex I subunit 3 family. As to quaternary structure, NDH is composed of at least 16 different subunits, 5 of which are encoded in the nucleus.

Its subcellular location is the plastid. It localises to the chloroplast thylakoid membrane. The enzyme catalyses a plastoquinone + NADH + (n+1) H(+)(in) = a plastoquinol + NAD(+) + n H(+)(out). The catalysed reaction is a plastoquinone + NADPH + (n+1) H(+)(in) = a plastoquinol + NADP(+) + n H(+)(out). Its function is as follows. NDH shuttles electrons from NAD(P)H:plastoquinone, via FMN and iron-sulfur (Fe-S) centers, to quinones in the photosynthetic chain and possibly in a chloroplast respiratory chain. The immediate electron acceptor for the enzyme in this species is believed to be plastoquinone. Couples the redox reaction to proton translocation, and thus conserves the redox energy in a proton gradient. This is NAD(P)H-quinone oxidoreductase subunit 3, chloroplastic from Agrostis stolonifera (Creeping bentgrass).